The chain runs to 316 residues: Aquaglyceroporin-2 (316 aa).

Residues 1-31 form a disordered region; the sequence is MADERGPINKSGPSSTYGATENNGESGGTRG. Residues 1-59 lie on the Cytoplasmic side of the membrane; sequence MADERGPINKSGPSSTYGATENNGESGGTRGAPATEDVIVIQDSGWYYIKFRFKEPFAE. The span at 11–24 shows a compositional bias: polar residues; sequence SGPSSTYGATENNG. The chain crosses the membrane as a helical span at residues 60-80; that stretch reads FLGTFILVAFGVGAIAQTVLS. The Extracellular portion of the chain corresponds to 81-86; that stretch reads KGATGN. A helical transmembrane segment spans residues 87–107; it reads WITIALGFGLGLALGIAVSGH. The Cytoplasmic portion of the chain corresponds to 108–131; it reads YSGGHLNPAVTITLAIYRKFPWVK. An NPA 1 motif is present at residues 114-116; the sequence is NPA. Residues 132–152 traverse the membrane as a helical segment; it reads VPVYITAQVLGAFVAAAVIYL. Residues 153 to 187 lie on the Extracellular side of the membrane; that stretch reads NYLPAIYNFAGDKRDVIGANATAGIFATYPQPFMS. The N-linked (GlcNAc...) asparagine glycan is linked to Asn172. A helical transmembrane segment spans residues 188–208; that stretch reads IGGAFFSEALGTFFLLFVILA. The Cytoplasmic segment spans residues 209-219; that stretch reads MTDERNVPTTR. The chain crosses the membrane as a helical span at residues 220–240; it reads IVAPITIGLTLTAIAISLGFE. Over 241 to 271 the chain is Extracellular; sequence TGFSLNAARDFGPRLFTFFIGYGVEVFTAYK. Positions 246 to 248 match the NPA 2 motif; it reads NAA. A helical membrane pass occupies residues 272–292; the sequence is FYFWIPLVAPIVGGLVAGFVY. Topologically, residues 293-316 are cytoplasmic; sequence DSLLYWGEKSFLNKNVHHEHRAVA.

This sequence belongs to the MIP/aquaporin (TC 1.A.8) family.

Its subcellular location is the cell membrane. It localises to the membrane. It catalyses the reaction H2O(in) = H2O(out). It carries out the reaction glycerol(in) = glycerol(out). Its activity is regulated as follows. Polyethylene glycol (PEG) stimulates whereas glycerol inhibits the aquaporin activity. Water channel required to facilitate the transport of water across membranes. Stimulates plant drought tolerance by facilitating the transport of water from the arbuscular mycorrhiza fungus to host plants. This is Aquaglyceroporin-2 from Rhizophagus irregularis (Arbuscular mycorrhizal fungus).